The chain runs to 399 residues: Inositol polyphosphate 1-phosphatase (399 aa).

Asp-54 contacts Li(+). Residue Glu-79 coordinates Mg(2+). Li(+) is bound at residue Glu-80. Mg(2+) is bound by residues Asp-153 and Ile-155. Residues Asp-156, Ser-157, Thr-158, Ser-267, Lys-269, Gly-289, Ala-290, Lys-293, and Thr-311 each contribute to the 1D-myo-inositol 1,4-bisphosphate site. Residue Asp-316 coordinates Mg(2+). A Phosphoserine modification is found at Ser-317.

The protein belongs to the inositol monophosphatase superfamily. Monomer. It depends on Mg(2+) as a cofactor. In terms of tissue distribution, ubiquitously expressed, with highest levels in pancreas and kidney.

It carries out the reaction 1D-myo-inositol 1,4-bisphosphate + H2O = 1D-myo-inositol 4-phosphate + phosphate. The enzyme catalyses 1D-myo-inositol 1,3,4-trisphosphate + H2O = 1D-myo-inositol 3,4-bisphosphate + phosphate. The protein operates within signal transduction; phosphatidylinositol signaling pathway. Its activity is regulated as follows. Inhibited by Li(+). In terms of biological role, mg(2+)-dependent phosphatase that catalyzes the hydrolysis of the 1-position phosphate from inositol 1,4-bisphosphate and inositol 1,3,4-trisphosphate and participates in inositol phosphate metabolism. The protein is Inositol polyphosphate 1-phosphatase of Homo sapiens (Human).